The chain runs to 506 residues: DNA polymerase type-X family protein pol4 (506 aa).

A BRCT domain is found at 1–98 (MKILASSTNY…TPGNPYVIWH (98 aa)). A disordered region spans residues 106-150 (GSPYTPSTRPASHTEAPNDFENHETPNTENNNEVKSIDNVDQEGS). Residues 348–357 (RGKPVGADVD) form an involved in ssDNA binding region. Asp355, Asp357, and Asp419 together coordinate Mg(2+).

This sequence belongs to the DNA polymerase type-X family. Mg(2+) is required as a cofactor.

It localises to the cytoplasm. It is found in the nucleus. The catalysed reaction is DNA(n) + a 2'-deoxyribonucleoside 5'-triphosphate = DNA(n+1) + diphosphate. Its function is as follows. Repair polymerase. Involved in gap-filling in DNA non-homologous end joining (NHEJ) required for double-strand break repair. Can incorporate a ribonucleotide (rNTP) into a primer DNA. The chain is DNA polymerase type-X family protein pol4 (pol4) from Schizosaccharomyces pombe (strain 972 / ATCC 24843) (Fission yeast).